The chain runs to 357 residues: Sulfate/thiosulfate import ATP-binding protein CysA (357 aa).

The ABC transporter domain maps to 3–237 (IQIQGVSKQY…PASPFVYDFL (235 aa)). 35–42 (GPSGSGKT) lines the ATP pocket.

The protein belongs to the ABC transporter superfamily. Sulfate/tungstate importer (TC 3.A.1.6) family. In terms of assembly, the complex is composed of two ATP-binding proteins (CysA), two transmembrane proteins (CysT and CysW) and a solute-binding protein (CysP).

It is found in the cell membrane. It catalyses the reaction sulfate(out) + ATP + H2O = sulfate(in) + ADP + phosphate + H(+). The catalysed reaction is thiosulfate(out) + ATP + H2O = thiosulfate(in) + ADP + phosphate + H(+). Part of the ABC transporter complex CysAWTP involved in sulfate/thiosulfate import. Responsible for energy coupling to the transport system. This is Sulfate/thiosulfate import ATP-binding protein CysA from Bacillus cereus (strain ATCC 14579 / DSM 31 / CCUG 7414 / JCM 2152 / NBRC 15305 / NCIMB 9373 / NCTC 2599 / NRRL B-3711).